We begin with the raw amino-acid sequence, 294 residues long: Protoheme IX farnesyltransferase (294 aa).

8 helical membrane passes run 19-39 (PKQTFLLLLTSIFTYVGAGGM), 41-61 (LDALLLLTAAMLLSISGTTSV), 89-109 (VEALSFGLLLFIVGLGLSYLI), 111-131 (PWTAFATSLGMAFDILVYTMW), 138-158 (LSIIFGGVAGAAPSLAGWAAA), 166-186 (AIMIALITILWIPSHIWYISI), 218-238 (VLMIILQLLLFLMGPLGPIFL), and 272-292 (SPVEGVIFLAIALDGIFRILW).

Belongs to the UbiA prenyltransferase family. Protoheme IX farnesyltransferase subfamily.

The protein resides in the cell membrane. The catalysed reaction is heme b + (2E,6E)-farnesyl diphosphate + H2O = Fe(II)-heme o + diphosphate. Its pathway is porphyrin-containing compound metabolism; heme O biosynthesis; heme O from protoheme: step 1/1. In terms of biological role, converts heme B (protoheme IX) to heme O by substitution of the vinyl group on carbon 2 of heme B porphyrin ring with a hydroxyethyl farnesyl side group. The protein is Protoheme IX farnesyltransferase of Korarchaeum cryptofilum (strain OPF8).